The primary structure comprises 251 residues: tRNA (guanine-N(1)-)-methyltransferase (251 aa).

Residues Gly-117 and 137–142 (IGDYVL) each bind S-adenosyl-L-methionine.

This sequence belongs to the RNA methyltransferase TrmD family. Homodimer.

The protein localises to the cytoplasm. The enzyme catalyses guanosine(37) in tRNA + S-adenosyl-L-methionine = N(1)-methylguanosine(37) in tRNA + S-adenosyl-L-homocysteine + H(+). Specifically methylates guanosine-37 in various tRNAs. The sequence is that of tRNA (guanine-N(1)-)-methyltransferase from Haemophilus ducreyi (strain 35000HP / ATCC 700724).